A 199-amino-acid chain; its full sequence is Recombination protein RecR (199 aa).

The segment at 57-72 (CQSCRTYTEETLCPIC) adopts a C4-type zinc-finger fold. A Toprim domain is found at 81 to 176 (STICVVETPA…MISRIAHGVP (96 aa)).

This sequence belongs to the RecR family.

May play a role in DNA repair. It seems to be involved in an RecBC-independent recombinational process of DNA repair. It may act with RecF and RecO. This Shewanella putrefaciens (strain CN-32 / ATCC BAA-453) protein is Recombination protein RecR.